Consider the following 684-residue polypeptide: Pseudohemocyanin-1 (684 aa).

The signal sequence occupies residues 1–23 (SLVVAAAAASPYSGSHDFSGFQR). The disordered stretch occupies residues 7-32 (AAASPYSGSHDFSGFQRDEPDGVPTA). 4 N-linked (GlcNAc...) asparagine glycosylation sites follow: N100, N193, N230, and N626.

Belongs to the tyrosinase family. Hemocyanin subfamily. Hexamer. As to expression, strongly expressed in ovaries. Also expressed in heart. Not detected in hepatopancreas, gills, connective tissue or muscle.

In terms of biological role, does not function as a hemocyanin. The polypeptide is Pseudohemocyanin-1 (Homarus americanus (American lobster)).